The chain runs to 195 residues: Transcription factor 15 (195 aa).

Residues 44–65 form a disordered region; that stretch reads LEAARRGPGPGSGRRASNGAGP. The segment covering 56-65 has biased composition (low complexity); that stretch reads GRRASNGAGP. Phosphoserine is present on serine 60. The bHLH domain occupies 70–122; the sequence is RQRQAANARERDRTQSVNTAFTALRTLIPTEPVDRKLSKIETLRLASSYIAHL.

As to quaternary structure, heterodimer; efficient DNA binding requires dimerization with another bHLH protein, such as TCF3/E12. Interacts with MEOX2. Expressed in heart and skeletal muscle. Specifically expressed in a subpopulation of embryonic stem cells (ESCs), that are still undifferentiated but primed for ifferentiation. Expressed in hematopoietic stem cells (HSCs).

It is found in the nucleus. Its function is as follows. Early transcription factor that plays a key role in somitogenesis, paraxial mesoderm development and regulation of stem cell pluripotency. Essential for the mesenchymal to epithelial transition associated with somite formation. Required for somite morphogenesis, thereby regulating patterning of the axial skeleton and skeletal muscles. Required for proper localization of somite epithelium markers during the mesenchymal to epithelial transition. Also plays a key role in regulation of stem cell pluripotency. Promotes pluripotency exit of embryonic stem cells (ESCs) by priming ESCs for differentiation. Acts as a key regulator of self-renewal of hematopoietic stem cells (HSCs) by mediating HSCs quiescence and long-term self-renewal. Together with MEOX2, regulates transcription in heart endothelial cells to regulate fatty acid transport across heart endothelial cells. Acts by forming a heterodimer with another helix-loop-helix (bHLH) protein, such as TCF3/E12, that binds DNA on E-box motifs (5'-CANNTG-3') and activates transcription of target genes. The sequence is that of Transcription factor 15 from Mus musculus (Mouse).